Consider the following 465-residue polypeptide: Protein maelstrom (465 aa).

The segment at residues 2–69 (APKKHSAFMV…ADRAKRERLN (68 aa)) is a DNA-binding region (HMG box). 2 disordered regions span residues 373–394 (NQSE…SYTP) and 419–443 (SKHR…PTHS). A compositionally biased stretch (low complexity) spans 381 to 391 (SSSRPSVESSS). The segment covering 422–433 (RGLDVSAQRERN) has biased composition (basic and acidic residues).

The protein belongs to the maelstrom family.

It localises to the cytoplasm. The protein resides in the nucleus. Involved both in the piRNA and miRNA metabolic processes. As a component of the meiotic nuage, plays a central role during oogenesis by repressing transposable elements and preventing their mobilization, which is essential for the germline integrity. Repression of transposable elements is mediated via the piRNA metabolic process, which mediates the repression of transposable elements during meiosis by forming complexes composed of piRNAs and Piwi proteins and governs the repression of transposons. As a nuclear component, it is required for proper differentiation in the germline stem cell (GSC) lineage by repressing microRNA-7 (miR-7), thereby acting as an indirect regulator of bag-of-marbles (Bam). Acts by binding to the promoter of miR-7 gene and repressing its expression; miR-7 repression alleviates the Bam repression by miR-7, thereby allowing differentiation in the germline stem cell (GSC) lineage. The protein is Protein maelstrom (mael) of Drosophila erecta (Fruit fly).